We begin with the raw amino-acid sequence, 490 residues long: Cytochrome P450 2C39 (490 aa).

Residues 1-25 (MDLVTFLVLTLSSLILLSLWRQSCG) form the signal peptide. Cysteine 435 serves as a coordination point for heme.

This sequence belongs to the cytochrome P450 family. Heme is required as a cofactor. In terms of tissue distribution, liver.

The protein resides in the endoplasmic reticulum membrane. It localises to the microsome membrane. It carries out the reaction an organic molecule + reduced [NADPH--hemoprotein reductase] + O2 = an alcohol + oxidized [NADPH--hemoprotein reductase] + H2O + H(+). It catalyses the reaction (5Z,8Z,11Z,14Z)-eicosatetraenoate + reduced [NADPH--hemoprotein reductase] + O2 = 11,12-epoxy-(5Z,8Z,14Z)-eicosatrienoate + oxidized [NADPH--hemoprotein reductase] + H2O + H(+). The enzyme catalyses (5Z,8Z,11Z,14Z)-eicosatetraenoate + reduced [NADPH--hemoprotein reductase] + O2 = 14,15-epoxy-(5Z,8Z,11Z)-eicosatrienoate + oxidized [NADPH--hemoprotein reductase] + H2O + H(+). The protein operates within lipid metabolism; arachidonate metabolism. A cytochrome P450 monooxygenase that primarily catalyzes the epoxidation of 11,12 and 14,15 double bonds of (5Z,8Z,11Z,14Z)-eicosatetraenoic acid (arachidonate) forming 11,12- and 14,15-epoxyeicosatrienoic acids (11,12- and 14,15-EET) regioisomers. Mechanistically, uses molecular oxygen inserting one oxygen atom into a substrate, and reducing the second into a water molecule, with two electrons provided by NADPH via cytochrome P450 reductase (CPR; NADPH--hemoprotein reductase). In Mus musculus (Mouse), this protein is Cytochrome P450 2C39.